The sequence spans 459 residues: Prenyltransferase penI (459 aa).

L-tryptophan is bound by residues 107–108 (VV) and Glu-111. Positions 126, 276, 278, 280, and 384 each coordinate substrate.

This sequence belongs to the tryptophan dimethylallyltransferase family.

It carries out the reaction quinolinone B + dimethylallyl diphosphate = peniprequinolone + diphosphate. It participates in secondary metabolite biosynthesis. It functions in the pathway alkaloid biosynthesis. The protein operates within mycotoxin biosynthesis. In terms of biological role, prenyltransferase; part of the gene cluster that mediates the biosynthesis of penigequinolones, potent insecticidal alkaloids that contain a highly modified 10-carbon prenyl group. The first stage is catalyzed by the nonribosomal peptide synthetase penN that condenses anthranilic acid and O-methyl-L-tyrosine to produce 4'-methoxycyclopeptin. 4'-methoxycyclopeptin is then converted to 4'-methoxydehydrocyclopeptin by the ketoglutarate-dependent dioxygenase penM through dehydrogenation to form a double bond between C-alpha and C-beta of the O-methyltyrosine side chain. PenM also converts its first product methoxydehydrocyclopeptin to 4'-methoxycyclopenin. The following conversion of 4'methoxycyclopenin into 4'-methoxyviridicatin is catalyzed by the cyclopenase penL. 4'-methoxyviridicatin is the precursor of quinolone natural products, and is further converted to quinolinone B. The prenyltransferase penI then catalyzes the canonical Friedel-Crafts alkylation of quinolinone B with dimethylallyl cation to yield dimethylallyl quinolone, which is subjected to FAD-dependent dehydrogenation by the FAD-linked oxidoreductase penH to yield conjugated aryl diene. The delta(3') double bond then serves as the site of the second alkylation with DMAPP catalyzed by the prenyltransferase penG to yield a carbenium ion intermediate, which can be attacked by H(2)O to yield a styrenyl quinolone containing a C3'-hydroxyprenyl chain, or undergo cyclization to yield yaequinolones J1 and J2. The conversion of the styrenyl quinolone into the tetrahydrofuran-containing yaequinolone C is performed by the FAD-dependent monooxygenase penE and involves epoxidation of the terminal C7'-C8' olefin, followed by epoxide ring opening initiated by the C3' hydroxyl group. The predicted cysteine hydrolase penJ acts as an epoxide hydrolase that enhances the rate of the 5-exo-tet cyclization step, increasing the yield of yaequinolone C. PenF catalyzes the cationic rearrangement of the epoxide formed by penE (before ring opening to produce yaequinolone C) into yaequinolone D. Finally, the short-chain dehydrogenase/reductase (SDR)-like reductase penD, catalyzes both the dehydration of yaequinolone D and the reduction of the resulting oxonium to yield penigequinolone. The polypeptide is Prenyltransferase penI (Penicillium thymicola).